A 454-amino-acid chain; its full sequence is UDP-N-acetylmuramoylalanine--D-glutamate ligase (454 aa).

G116–S122 is an ATP binding site.

The protein belongs to the MurCDEF family.

The protein resides in the cytoplasm. The catalysed reaction is UDP-N-acetyl-alpha-D-muramoyl-L-alanine + D-glutamate + ATP = UDP-N-acetyl-alpha-D-muramoyl-L-alanyl-D-glutamate + ADP + phosphate + H(+). The protein operates within cell wall biogenesis; peptidoglycan biosynthesis. Its function is as follows. Cell wall formation. Catalyzes the addition of glutamate to the nucleotide precursor UDP-N-acetylmuramoyl-L-alanine (UMA). This Lachnoclostridium phytofermentans (strain ATCC 700394 / DSM 18823 / ISDg) (Clostridium phytofermentans) protein is UDP-N-acetylmuramoylalanine--D-glutamate ligase.